The primary structure comprises 129 residues: Transcription antitermination protein NusB (129 aa).

The protein belongs to the NusB family.

Involved in transcription antitermination. Required for transcription of ribosomal RNA (rRNA) genes. Binds specifically to the boxA antiterminator sequence of the ribosomal RNA (rrn) operons. In Staphylococcus aureus (strain MRSA252), this protein is Transcription antitermination protein NusB.